Reading from the N-terminus, the 869-residue chain is MYVIKRDGRKEPVQFDKITSRITRLSYGLDPNRIDAVKVTQRIISGVYSGVTTVELDNLAAETCAYMTTVHPDYATLAARIAISNLHKQTTKQFSKVIEDLHDWINPATGKHAPMISDEIYNIVMENKDTLNSAIVYDRDFQYTYFGFKTLERSYLLRLNGEVAERPQHLVMRVALGIHGSDIESVLKTYNLMSLRYFTHASPTLFNAGTPHPQMSSCFLIAMKDDSIEGIYDTLKECAMISKTAGGVGLHINNIRSTGSYIAGTNGTSNGLIPMIRVFNNTARYVDQGGNKRPGAFALFLEPWHADIFDFVDIRKTHGKEEIRARDLFPALWIPDLFMKRVQEDGPWTLFSPSAAPGLDDVWGDEFEELYTRYEREGRGKTIKAQKLWYAILQAQTETGTPFMVYKDACNRKTNQQNLGTIKSSNLCCEIVEYSSPDETAVCNLASIALPAFVEVSEDGKTASYNFERLHEIAKVITHNLNRVIDRNYYPVPEARNSNMKHRPIALGVQGLADTYMMLRLPFESEEAQTLNKQIFETIYHATLEASCELAQKEGKYSTFEGSPASKGILQFDMWNAKPFGMWDWETLRKDIVKHGLRNSLTMAPMPTASTSQILGYNECFEPVTSNMYSRRVLSGEFQVVNPYLLRDLVDLGIWDDSMKQYLITQNGSIQGLPNVPQELKELYKTVWEISQKTIINMAADRAIYIDQSHSLNLFLQAPSMGKITSMHFYGWKKGLKTGMYYLRTQAASAAIQFTIDQEVADQAATHIASVSELDRPVYVPKGTKFSEQKAASALTESSDNEKDASPVPSEQSSVSSAMSNVKLEDSVAPAVPTETIKEDSDEKKCDIYNEKVIACTAPTPEACESCSG.

Positions 1–92 constitute an ATP-cone domain; it reads MYVIKRDGRK…ISNLHKQTTK (92 aa). ATP is bound by residues 5 to 6, 11 to 17, Thr53, and Asp57; these read KR and EPVQFDK. Positions 202 and 217 each coordinate GDP. The cysteines at positions 218 and 443 are disulfide-linked. Residues 226 to 228, Lys243, Arg256, and 263 to 264 contribute to the dTTP site; these read DSI and AG. Phosphoserine is present on Ser227. Lys387 participates in a covalent cross-link: Glycyl lysine isopeptide (Lys-Gly) (interchain with G-Cter in ubiquitin). Asn426 lines the GDP pocket. Asn426 acts as the Proton acceptor in catalysis. Cys428 acts as the Cysteine radical intermediate in catalysis. Residues Glu430 and 608-611 contribute to the GDP site; that span reads TAST. The active-site Proton acceptor is Glu430. A disordered region spans residues 793–843; the sequence is SALTESSDNEKDASPVPSEQSSVSSAMSNVKLEDSVAPAVPTETIKEDSDE. Phosphoserine is present on residues Ser806, Ser827, and Ser868. The span at 806-820 shows a compositional bias: low complexity; that stretch reads SPVPSEQSSVSSAMS.

The protein belongs to the ribonucleoside diphosphate reductase large chain family. Heterotetramer of two large (R1) and two small (R2) subunits. S.cerevisiae has two different R1 subunits (RNR1 and RNR3) and two different R2 subunits (RNR2 and RNR4). The functional form of the small subunits is a RNR2-RNR4 heterodimer, where RNR2 provides the iron-radical center and RNR4 is required for proper folding of RNR2 and assembly with the large subunits. Under normal growth conditions, the active form of the large subunits is a homodimer of the constitutively expressed RNR1. In damaged cells or cells arrested for DNA synthesis, the reductase consists of multiple species because of the association of the small subunits (RNR2-RNR4) with either the RNR1 homodimer or a heterodimer of RNR1 and the damage-inducible RNR3.

It localises to the cytoplasm. The catalysed reaction is a 2'-deoxyribonucleoside 5'-diphosphate + [thioredoxin]-disulfide + H2O = a ribonucleoside 5'-diphosphate + [thioredoxin]-dithiol. With respect to regulation, under complex allosteric control mediated by deoxynucleoside triphosphates and ATP binding to separate specificity and activation sites on the large subunit. The type of nucleotide bound at the specificity site determines substrate preference. It seems probable that ATP makes the enzyme reduce CDP and UDP, dGTP favors ADP reduction and dTTP favors GDP reduction. Stimulated by ATP and inhibited by dATP binding to the activity site. Provides the precursors necessary for DNA synthesis. Catalyzes the biosynthesis of deoxyribonucleotides from the corresponding ribonucleotides. The protein is Ribonucleoside-diphosphate reductase large chain 2 (RNR3) of Saccharomyces cerevisiae (strain ATCC 204508 / S288c) (Baker's yeast).